Here is a 336-residue protein sequence, read N- to C-terminus: Dihydroorotate dehydrogenase (quinone) (336 aa).

Residues 62 to 66 (AGLDK) and T86 each bind FMN. K66 serves as a coordination point for substrate. 111–115 (NRMGF) lines the substrate pocket. FMN is bound by residues N139 and N172. Residue N172 participates in substrate binding. S175 serves as the catalytic Nucleophile. N177 is a binding site for substrate. Residues K217 and T245 each coordinate FMN. 246–247 (NT) lines the substrate pocket. FMN is bound by residues G268, G297, and 318-319 (YS).

The protein belongs to the dihydroorotate dehydrogenase family. Type 2 subfamily. Monomer. Requires FMN as cofactor.

Its subcellular location is the cell membrane. It catalyses the reaction (S)-dihydroorotate + a quinone = orotate + a quinol. It participates in pyrimidine metabolism; UMP biosynthesis via de novo pathway; orotate from (S)-dihydroorotate (quinone route): step 1/1. Its function is as follows. Catalyzes the conversion of dihydroorotate to orotate with quinone as electron acceptor. The protein is Dihydroorotate dehydrogenase (quinone) of Klebsiella pneumoniae (strain 342).